The chain runs to 271 residues: Ferric vulnibactin reductase VuuB (271 aa).

An FAD-binding FR-type domain is found at 8-131 (VYPMLLDFVR…IGPAGPDPLI (124 aa)).

It belongs to the SIP oxidoreductase family. In terms of assembly, monomer. It depends on FAD as a cofactor.

The protein localises to the cytoplasm. It carries out the reaction 2 a Fe(II)-siderophore + NAD(+) + H(+) = 2 a Fe(III)-siderophore + NADH. In terms of biological role, ferric-siderophore reductase involved in iron removal from the siderophores after their transport into the cell. Acts as a major ferric-vulnibactin reductase catalyzing the reduction of Fe(3+)-vulnibactin, a catecholate siderophore synthesized by V.vulnificus. This is Ferric vulnibactin reductase VuuB from Vibrio vulnificus (strain CMCP6).